The chain runs to 318 residues: MLSAHRPAEPPAVEGCEPPRKERQGGLLPPDDRHDSGLDSMKEEEYRQLVRELEDIRLQPREPPARPHAWAQQLTEDGDTFLHLAIIHEEKALSLEVIRQAAGDAAFLNFQNNLSQTPLHLAVITDQAEIAEHLLKAGCDLDVRDFRGNTPLHIACQQGSLRSVSVLTQHCQPHHLLAVLQATNYNGHTCLHLASIQGYLAVVEYLLSLGADVNAQEPCNGRTALHLAVDLQNSDLVSLLVKHGPDVNKVTYQGYSPYQLTWGRDNASIQEQLKLLTTADLQILPESEDEESSESEPEFTEDELMYDDCCIGGRQLTF.

Residues 1–44 (MLSAHRPAEPPAVEGCEPPRKERQGGLLPPDDRHDSGLDSMKEE) are disordered. Over residues 17-44 (EPPRKERQGGLLPPDDRHDSGLDSMKEE) the composition is skewed to basic and acidic residues. Lys-21 is covalently cross-linked (Glycyl lysine isopeptide (Lys-Gly) (interchain with G-Cter in ubiquitin)). The residue at position 36 (Ser-36) is a Phosphoserine; by IKKA and IKKB. Position 40 is a phosphoserine; by IKKA, IKKB and IKKE (Ser-40). Tyr-46 carries the phosphotyrosine; by Tyr-kinases modification. ANK repeat units follow at residues 114–143 (LSQT…DLDV), 147–176 (RGNT…PHHL), 186–215 (NGHT…DVNA), and 220–249 (NGRT…DVNK).

Belongs to the NF-kappa-B inhibitor family. Post-translationally, phosphorylated at Ser-36 and Ser-40 by IKKA/CHUK and IKKB/IKBKB; disables inhibition of NF-kappa-B DNA-binding activity. Phosphorylation at positions 36 and 40 is prerequisite to polyubiquitination and subsequent degradation. In terms of processing, monoubiquitinated at Lys-21 following phosphorylation at Ser-36 and Ser-40. The resulting polyubiquitination leads to protein degradation. Hydroxylated by HIF1AN. In terms of tissue distribution, highly expressed in lymph node, thymus followed by liver, brain, muscle, kidney, gastrointestinal and reproductive tract.

It is found in the cytoplasm. The protein localises to the nucleus. Functionally, inhibits the activity of dimeric NF-kappa-B/REL complexes by trapping REL (RELA/p65 and NFKB1/p50) dimers in the cytoplasm by masking their nuclear localization signals. On cellular stimulation by immune and pro-inflammatory responses, becomes phosphorylated promoting ubiquitination and degradation, enabling the dimeric RELA to translocate to the nucleus and activate transcription. The sequence is that of NF-kappa-B inhibitor alpha (NFKBIA) from Gallus gallus (Chicken).